The primary structure comprises 433 residues: Dihydroorotase (433 aa).

Zn(2+)-binding residues include histidine 63 and histidine 65. Residues 65 to 67 (HLR) and asparagine 97 contribute to the substrate site. Residues aspartate 155, histidine 182, and histidine 235 each coordinate Zn(2+). Asparagine 283 serves as a coordination point for substrate. Aspartate 310 is a binding site for Zn(2+). Aspartate 310 is an active-site residue. Substrate is bound at residue histidine 314.

This sequence belongs to the metallo-dependent hydrolases superfamily. DHOase family. Class I DHOase subfamily. Requires Zn(2+) as cofactor.

It catalyses the reaction (S)-dihydroorotate + H2O = N-carbamoyl-L-aspartate + H(+). The protein operates within pyrimidine metabolism; UMP biosynthesis via de novo pathway; (S)-dihydroorotate from bicarbonate: step 3/3. Catalyzes the reversible cyclization of carbamoyl aspartate to dihydroorotate. The protein is Dihydroorotase of Anaeromyxobacter dehalogenans (strain 2CP-C).